The chain runs to 225 residues: NAD(P)H-quinone oxidoreductase subunit K, chloroplastic (225 aa).

[4Fe-4S] cluster is bound by residues Cys43, Cys44, Cys108, and Cys139.

This sequence belongs to the complex I 20 kDa subunit family. NDH is composed of at least 16 different subunits, 5 of which are encoded in the nucleus. [4Fe-4S] cluster is required as a cofactor.

The protein resides in the plastid. Its subcellular location is the chloroplast thylakoid membrane. It carries out the reaction a plastoquinone + NADH + (n+1) H(+)(in) = a plastoquinol + NAD(+) + n H(+)(out). It catalyses the reaction a plastoquinone + NADPH + (n+1) H(+)(in) = a plastoquinol + NADP(+) + n H(+)(out). Functionally, NDH shuttles electrons from NAD(P)H:plastoquinone, via FMN and iron-sulfur (Fe-S) centers, to quinones in the photosynthetic chain and possibly in a chloroplast respiratory chain. The immediate electron acceptor for the enzyme in this species is believed to be plastoquinone. Couples the redox reaction to proton translocation, and thus conserves the redox energy in a proton gradient. The protein is NAD(P)H-quinone oxidoreductase subunit K, chloroplastic of Daucus carota (Wild carrot).